We begin with the raw amino-acid sequence, 372 residues long: Aminomethyltransferase (372 aa).

This sequence belongs to the GcvT family. As to quaternary structure, the glycine cleavage system is composed of four proteins: P, T, L and H.

It catalyses the reaction N(6)-[(R)-S(8)-aminomethyldihydrolipoyl]-L-lysyl-[protein] + (6S)-5,6,7,8-tetrahydrofolate = N(6)-[(R)-dihydrolipoyl]-L-lysyl-[protein] + (6R)-5,10-methylene-5,6,7,8-tetrahydrofolate + NH4(+). Functionally, the glycine cleavage system catalyzes the degradation of glycine. The chain is Aminomethyltransferase from Synechococcus elongatus (strain ATCC 33912 / PCC 7942 / FACHB-805) (Anacystis nidulans R2).